A 138-amino-acid chain; its full sequence is Small ribosomal subunit protein uS11c (138 aa).

Residues 1–23 are disordered; that stretch reads MAKAIPRVGSRKNGRISSRKSAR. Positions 9–23 are enriched in basic residues; that stretch reads GSRKNGRISSRKSAR.

Belongs to the universal ribosomal protein uS11 family. In terms of assembly, part of the 30S ribosomal subunit.

It localises to the plastid. Its subcellular location is the chloroplast. In Coffea arabica (Arabian coffee), this protein is Small ribosomal subunit protein uS11c.